Reading from the N-terminus, the 379-residue chain is tRNA-specific 2-thiouridylase MnmA (379 aa).

ATP contacts are provided by residues 9–16 and methionine 35; that span reads AMSGGVDS. An interaction with target base in tRNA region spans residues 94–96; sequence NPD. The active-site Nucleophile is cysteine 99. A disulfide bond links cysteine 99 and cysteine 195. Glycine 123 is an ATP binding site. Residues 145–147 are interaction with tRNA; that stretch reads KDQ. The active-site Cysteine persulfide intermediate is the cysteine 195. Residues 307–308 form an interaction with tRNA region; sequence RY.

Belongs to the MnmA/TRMU family.

Its subcellular location is the cytoplasm. The enzyme catalyses S-sulfanyl-L-cysteinyl-[protein] + uridine(34) in tRNA + AH2 + ATP = 2-thiouridine(34) in tRNA + L-cysteinyl-[protein] + A + AMP + diphosphate + H(+). Catalyzes the 2-thiolation of uridine at the wobble position (U34) of tRNA, leading to the formation of s(2)U34. In Xylella fastidiosa (strain 9a5c), this protein is tRNA-specific 2-thiouridylase MnmA.